We begin with the raw amino-acid sequence, 194 residues long: UPF0301 protein BPEN_258 (194 aa).

It belongs to the UPF0301 (AlgH) family.

The sequence is that of UPF0301 protein BPEN_258 from Blochmanniella pennsylvanica (strain BPEN).